A 208-amino-acid chain; its full sequence is Putative 3-methyladenine DNA glycosylase (208 aa).

A disordered region spans residues 1–20 (MGRAHTVSRGEDHPPIARSE).

This sequence belongs to the DNA glycosylase MPG family.

The protein is Putative 3-methyladenine DNA glycosylase of Mesorhizobium japonicum (strain LMG 29417 / CECT 9101 / MAFF 303099) (Mesorhizobium loti (strain MAFF 303099)).